Reading from the N-terminus, the 510-residue chain is 2,3-bisphosphoglycerate-independent phosphoglycerate mutase (510 aa).

Mn(2+)-binding residues include Asp-12 and Ser-62. Ser-62 serves as the catalytic Phosphoserine intermediate. Substrate is bound by residues His-123, 152–153 (RD), Arg-184, Arg-190, 257–260 (RADR), and Lys-331. Mn(2+)-binding residues include Asp-399, His-403, Asp-440, His-441, and His-458.

Belongs to the BPG-independent phosphoglycerate mutase family. Monomer. Requires Mn(2+) as cofactor.

It carries out the reaction (2R)-2-phosphoglycerate = (2R)-3-phosphoglycerate. Its pathway is carbohydrate degradation; glycolysis; pyruvate from D-glyceraldehyde 3-phosphate: step 3/5. Functionally, catalyzes the interconversion of 2-phosphoglycerate and 3-phosphoglycerate. The sequence is that of 2,3-bisphosphoglycerate-independent phosphoglycerate mutase from Lawsonia intracellularis (strain PHE/MN1-00).